The sequence spans 721 residues: DNA ligase (721 aa).

NAD(+)-binding positions include 39–43 (DAEYD), 89–90 (SL), and Glu123. Lys125 functions as the N6-AMP-lysine intermediate in the catalytic mechanism. 4 residues coordinate NAD(+): Arg146, Glu186, Lys302, and Lys326. The Zn(2+) site is built by Cys418, Cys421, Cys436, and Cys442. Residues 556-588 (QASSAAREGEPANADGAYDPATVTPDSDTAGAE) form a disordered region. Positions 641–721 (TKDSAVAGKT…AWAEIVRQAG (81 aa)) constitute a BRCT domain.

The protein belongs to the NAD-dependent DNA ligase family. LigA subfamily. It depends on Mg(2+) as a cofactor. The cofactor is Mn(2+).

It carries out the reaction NAD(+) + (deoxyribonucleotide)n-3'-hydroxyl + 5'-phospho-(deoxyribonucleotide)m = (deoxyribonucleotide)n+m + AMP + beta-nicotinamide D-nucleotide.. Functionally, DNA ligase that catalyzes the formation of phosphodiester linkages between 5'-phosphoryl and 3'-hydroxyl groups in double-stranded DNA using NAD as a coenzyme and as the energy source for the reaction. It is essential for DNA replication and repair of damaged DNA. This Novosphingobium aromaticivorans (strain ATCC 700278 / DSM 12444 / CCUG 56034 / CIP 105152 / NBRC 16084 / F199) protein is DNA ligase.